The sequence spans 741 residues: DDVALYFSGQEWEILEKWQKQMYKQEMKTNYQTLDSLGYAFSKPDLITWMEQGRMLFISEQGCLDKTRRTTSPPTDEQLDMKDTGKLPCFDHEGTLRTKEEDCRLNGPQKQDLGAALPGKERKILSARRDTFQSPSLQETEIPNKKVSITASDPDKKDLRHKPRETPGRLEIPTGPRCYSCYVCRKVFQVRRDLLKHKRSHSKSQLRRYPKYRNTSRGKSELRRTQRLLCQKKRFQCSECEKSYFLKGSLVTHQVVHTGQRPYPCPECDKTFRYRANLKKHLCLHRGERPFCCGECGRAFVQQCELTEHLRLHSGEKPFQCPQCDRCFRLKRGMKVHLSQHSGKRPFHCPECGRSFSRKAALKTHQRTHSEEKPFSCDECGRKFIYKIKLDEHIRVHTGEKPFSCPECNKSFRLKRSLKAHGLQHSGKRPFQCPECSRGFFWRNAMRAHQRLHSEQKPFPCAECGKRFTRPSKLACHTRVHDRQKEFPCGECKKTFSQQSRLTQHLKVHNTEKPFSCAECGRSFRRRAHLTEHTRLHSGEEPFQCPECDKSFSWKASMKFHQRMHRDEKPFACSECGKTYTHQSQLTEHLRLHSGEKPYQCPECQKTFRLKGNLKSHLLQHSGQKPFSCVMCGKSFTQQYRLTEHIRVHSGEKPFQCPECDKSYCIRGSLKVHLYTHSGERPFQCPECGKGFLQKRSLKAHLCLHSGERPFSCDECGRSFTYVGALKTHIAVHAKEKPSSL.

Positions 1–69 (DDVALYFSGQ…EQGCLDKTRR (69 aa)) constitute a KRAB domain. Disordered regions lie at residues 67-86 (TRRT…DTGK) and 128-169 (RRDT…TPGR). A compositionally biased stretch (polar residues) spans 132–151 (FQSPSLQETEIPNKKVSITA). Basic and acidic residues predominate over residues 153–168 (DPDKKDLRHKPRETPG). 19 consecutive C2H2-type zinc fingers follow at residues 179–201 (YSCY…KRSH), 235–257 (FQCS…QVVH), 263–285 (YPCP…LCLH), 291–313 (FCCG…LRLH), 319–341 (FQCP…LSQH), 347–369 (FHCP…QRTH), 375–397 (FSCD…IRVH), 403–425 (FSCP…GLQH), 431–453 (FQCP…QRLH), 459–481 (FPCA…TRVH), 487–509 (FPCG…LKVH), 515–537 (FSCA…TRLH), 543–565 (FQCP…QRMH), 571–593 (FACS…LRLH), 599–621 (YQCP…LLQH), 627–649 (FSCV…IRVH), 655–677 (FQCP…LYTH), 683–705 (FQCP…LCLH), and 711–733 (FSCD…IAVH).

This sequence belongs to the krueppel C2H2-type zinc-finger protein family.

It localises to the nucleus. The protein localises to the cytoplasm. Acts as a transcriptional repressor. This Macaca fascicularis (Crab-eating macaque) protein is Zinc finger protein 425 (ZNF425).